A 246-amino-acid polypeptide reads, in one-letter code: Probable transcriptional regulatory protein YebC (246 aa).

The segment at 1–20 (MAGHSKWANTRHRKAAQDAK) is disordered.

It belongs to the TACO1 family.

The protein resides in the cytoplasm. The polypeptide is Probable transcriptional regulatory protein YebC (Salmonella typhimurium (strain LT2 / SGSC1412 / ATCC 700720)).